We begin with the raw amino-acid sequence, 188 residues long: Ribosome-recycling factor (188 aa).

The protein belongs to the RRF family.

The protein resides in the cytoplasm. Responsible for the release of ribosomes from messenger RNA at the termination of protein biosynthesis. May increase the efficiency of translation by recycling ribosomes from one round of translation to another. The sequence is that of Ribosome-recycling factor from Akkermansia muciniphila (strain ATCC BAA-835 / DSM 22959 / JCM 33894 / BCRC 81048 / CCUG 64013 / CIP 107961 / Muc).